A 707-amino-acid polypeptide reads, in one-letter code: DNA-binding protein RFX2 (707 aa).

Residue serine 33 is modified to Phosphoserine. Positions histidine 204–proline 279 form a DNA-binding region, RFX-type winged-helix. Positions glutamine 297–glutamine 337 are disordered. Residues leucine 315–glutamine 337 are compositionally biased toward low complexity. Serine 420 carries the phosphoserine modification.

It belongs to the RFX family. Homodimer; probably only forms homodimers in testis. Heterodimer; heterodimerizes with RFX1 and RFX3.

It localises to the nucleus. Its subcellular location is the cytoplasm. Functionally, transcription factor that acts as a key regulator of spermatogenesis. Acts by regulating expression of genes required for the haploid phase during spermiogenesis, such as genes required for cilium assembly and function. Recognizes and binds the X-box, a regulatory motif with DNA sequence 5'-GTNRCC(0-3N)RGYAAC-3' present on promoters. Probably activates transcription of the testis-specific histone gene H1-6. In Bos taurus (Bovine), this protein is DNA-binding protein RFX2 (RFX2).